Consider the following 689-residue polypeptide: Elongation factor G (689 aa).

Residues 9 to 283 (AKFRNIGIMA…AIIEFMPSPL (275 aa)) form the tr-type G domain. Residues 18-25 (AHIDAGKT), 82-86 (DTPGH), and 136-139 (NKMD) contribute to the GTP site.

This sequence belongs to the TRAFAC class translation factor GTPase superfamily. Classic translation factor GTPase family. EF-G/EF-2 subfamily.

It is found in the cytoplasm. Its function is as follows. Catalyzes the GTP-dependent ribosomal translocation step during translation elongation. During this step, the ribosome changes from the pre-translocational (PRE) to the post-translocational (POST) state as the newly formed A-site-bound peptidyl-tRNA and P-site-bound deacylated tRNA move to the P and E sites, respectively. Catalyzes the coordinated movement of the two tRNA molecules, the mRNA and conformational changes in the ribosome. The protein is Elongation factor G of Clostridium botulinum (strain 657 / Type Ba4).